The following is a 354-amino-acid chain: Cysteine proteinase 1 (354 aa).

An N-terminal signal peptide occupies residues 1–24; it reads MARRNPLLFAIVVTILFVVCYGSA. The propeptide at 25–125 is activation peptide; sequence LIAQTPPPVD…HKEDVHVDDS (101 aa). Cystine bridges form between Cys-150-Cys-191, Cys-184-Cys-229, and Cys-282-Cys-330. The active site involves Cys-153. The N-linked (GlcNAc...) asparagine glycan is linked to Asn-208. Catalysis depends on residues His-289 and Asn-309.

Belongs to the peptidase C1 family.

The cysteine proteinases have a potential role in host-parasite interaction and virulence. This chain is Cysteine proteinase 1 (CYS1), found in Leishmania pifanoi.